The chain runs to 391 residues: Inhibin beta B chain (391 aa).

Positions 1–25 (MDGAARRGVLAALLACGLLLLGAAA) are cleaved as a signal peptide. A propeptide spanning residues 26–276 (TPTPPPAGSS…ADNKHRIRKR (251 aa)) is cleaved from the precursor. Positions 27–47 (PTPPPAGSSPQDTCTSCGFRR) are disordered. An N-linked (GlcNAc...) asparagine glycan is attached at Asn-77. Cystine bridges form between Cys-280/Cys-288, Cys-287/Cys-356, Cys-316/Cys-388, and Cys-320/Cys-390.

It belongs to the TGF-beta family. Dimeric, linked by one or more disulfide bonds. Inhibin A is a dimer of alpha and beta-A. Inhibin B is a dimer of alpha and beta-B. Activin A is a homodimer of beta-A. Activin B is a homodimer of beta-B. Activin AB is a dimer of beta-A and beta-B.

The protein resides in the secreted. In terms of biological role, inhibins and activins inhibit and activate, respectively, the secretion of follitropin by the pituitary gland. Inhibins/activins are involved in regulating a number of diverse functions such as hypothalamic and pituitary hormone secretion, gonadal hormone secretion, germ cell development and maturation, erythroid differentiation, insulin secretion, nerve cell survival, embryonic axial development or bone growth, depending on their subunit composition. Inhibins appear to oppose the functions of activins. The chain is Inhibin beta B chain (INHBB) from Gallus gallus (Chicken).